Consider the following 488-residue polypeptide: MIQVLLVTICLAVFPYQGSSIILESGNVNDYEVVYPRKVTALPKGAAQPKYEDAMQYEFKVNGEPVVLHLEKNKELFSEDYSETHYSPDGREITTYPLVEDHCYYHGRIENDADSTASISACNGLKGHFKLQGETYLIEPLKLSDSEAHAVYKYENVEKEDEASKMCGVTETNWESYEPIKKASQLNLPPEQQRFPQTYIELVVVADHRMYTKYDGDKTEISSIIYEIVNTLTQIFRPLHIRVALIGLEIWSSGELSKVTLSADDTLEAFGEWRETVLMNRKRHDNAQLLTGMIFNETIEGRTYKSGMCNPKHSVGIVRDYRTRRHFVANRMAHELGHNLGIDHDRDSCTCGANSCIMSATVSNEPSSQFSDCSLNKYLNYIVRYQSTTRCLHNEPSETDIVSPPFCGNYFKEVGEDCDCGPPANCQNPCCDAATCKLTTGSQCAEGLCCDQCKFTKKGTACRPARGDWNDDTCTGQSADCPRNGLYG.

The first 20 residues, 1–20 (MIQVLLVTICLAVFPYQGSS), serve as a signal peptide directing secretion. The propeptide occupies 21–191 (IILESGNVND…KASQLNLPPE (171 aa)). The Peptidase M12B domain maps to 198 to 396 (TYIELVVVAD…STTRCLHNEP (199 aa)). Ca(2+)-binding residues include E201 and D285. N296 carries an N-linked (GlcNAc...) asparagine glycan. Intrachain disulfides connect C309-C391, C349-C373, and C351-C356. Zn(2+) is bound at residue H334. The active site involves E335. Residues H338 and H344 each coordinate Zn(2+). Residues C391, N394, N409, E413, E416, and D419 each contribute to the Ca(2+) site. Residues 404 to 488 (PPFCGNYFKE…ADCPRNGLYG (85 aa)) enclose the Disintegrin domain. 7 cysteine pairs are disulfide-bonded: C407/C426, C418/C436, C420/C431, C430/C453, C444/C450, C449/C474, and C462/C481. The short motif at 466–468 (RGD) is the Cell attachment site element.

This sequence belongs to the venom metalloproteinase (M12B) family. P-II subfamily. Requires Zn(2+) as cofactor. In terms of tissue distribution, expressed by the venom gland.

The protein localises to the secreted. In terms of biological role, inhibits ADP-induced platelet aggregation (probably by binding integrin alpha-IIb/beta-3 (ITGA2B/ITGB3)) and degrades fibrinogen. In Crotalus adamanteus (Eastern diamondback rattlesnake), this protein is Zinc metalloproteinase-disintegrin 8.